The following is a 541-amino-acid chain: MNGVVIPQTPIAVDFWSLRRAGSARLFFLTHMHCDHTVGLSSTWARPLYCSPITACLLHRRLQVSKHWIRALEVGESHVLPLDEIGQETMTVTLIDANHCPGSVMFLFEGYFGTILYTGDFRYTPSMLKEPALILGKQIHTLYLDNTNCNPALVLPSRQEATQQIVQLIRQFPQHNIKIGLYSLGKESLLEQLALEFRTWVVLSPQRLELVQLLGLADVFTVEEEAGRIHAVDHTEICHSAMLQWNQSHPTIAIFPTSRKVRSPHPSIYTVPYSDHSSYSELRAFVAALRPCQVVPIVHQKPCGEFFQDSLSPRLAMPLIPHSVQQYMSSSSRKTNVLWQLERRLKRPRTQGVVFESPEEKANQVKVDRDSKKHKKENLSPWAGHLERLCPHPLQARKQLFPDFCRKERDEPVLFCDSNKMATVLTAPLEFSVQLQPIDEFLFPETREKIGLESPLLSRGDSGSPARGNQSDCVGCGSPPAHISRAVPLTPESRGLALKYLLTPVHFLQAGFSSRNFDKQVEKHQRVQRSSPAVLSPVDVG.

A Glycyl lysine isopeptide (Lys-Gly) (interchain with G-Cter in SUMO2) cross-link involves residue Lys-334. Residues 455 to 475 (PLLSRGDSGSPARGNQSDCVG) are disordered. A TBM motif is present at residues 492–507 (ESRGLALKYLLTPVHF).

It belongs to the DNA repair metallo-beta-lactamase (DRMBL) family. In terms of assembly, interacts with MUS81, MRE11 and FANCD2. Interacts with HSPA2, HSPA8 and HSPA14. Interacts with SPAG5. Interacts with TERF2; the interaction is direct. Post-translationally, ubiquitinated, leading to its degradation. Interaction with TERF2 protects it from ubiquitination.

It is found in the chromosome. It localises to the telomere. The protein localises to the nucleus. The protein resides in the cytoplasm. Its subcellular location is the cytoskeleton. It is found in the microtubule organizing center. It localises to the centrosome. The enzyme catalyses a beta-lactam + H2O = a substituted beta-amino acid. 5'-3' exonuclease that plays a central role in telomere maintenance and protection during S-phase. Participates in the protection of telomeres against non-homologous end-joining (NHEJ)-mediated repair, thereby ensuring that telomeres do not fuse. Plays a key role in telomeric loop (T loop) formation by being recruited by TERF2 at the leading end telomeres and by processing leading-end telomeres immediately after their replication via its exonuclease activity: generates 3' single-stranded overhang at the leading end telomeres avoiding blunt leading-end telomeres that are vulnerable to end-joining reactions and expose the telomere end in a manner that activates the DNA repair pathways. Together with TERF2, required to protect telomeres from replicative damage during replication by controlling the amount of DNA topoisomerase (TOP1, TOP2A and TOP2B) needed for telomere replication during fork passage and prevent aberrant telomere topology. Also involved in response to DNA damage: plays a role in response to DNA interstrand cross-links (ICLs) by facilitating double-strand break formation. In case of spindle stress, involved in prophase checkpoint. Possesses beta-lactamase activity, catalyzing the hydrolysis of penicillin G and nitrocefin. Exhibits no activity towards other beta-lactam antibiotic classes including cephalosporins (cefotaxime) and carbapenems (imipenem). The chain is 5' exonuclease Apollo (Dclre1b) from Mus musculus (Mouse).